Here is an 86-residue protein sequence, read N- to C-terminus: Small ribosomal subunit protein bS20 (86 aa).

Positions 1–25 (MANIKSQMKRIRTNEAARKRNQSVK) are disordered.

This sequence belongs to the bacterial ribosomal protein bS20 family.

In terms of biological role, binds directly to 16S ribosomal RNA. This is Small ribosomal subunit protein bS20 from Nocardia farcinica (strain IFM 10152).